Here is a 445-residue protein sequence, read N- to C-terminus: Trigger factor (445 aa).

The region spanning 164–249 is the PPIase FKBP-type domain; that stretch reads GDQVTFDFEG…VKKVEEAKLP (86 aa).

It belongs to the FKBP-type PPIase family. Tig subfamily.

The protein localises to the cytoplasm. The catalysed reaction is [protein]-peptidylproline (omega=180) = [protein]-peptidylproline (omega=0). Functionally, involved in protein export. Acts as a chaperone by maintaining the newly synthesized protein in an open conformation. Functions as a peptidyl-prolyl cis-trans isomerase. The protein is Trigger factor of Psychrobacter sp. (strain PRwf-1).